Here is a 271-residue protein sequence, read N- to C-terminus: Inactive phospholipid phosphatase 7 (271 aa).

Positions 1 to 69 are disordered; that stretch reads MPVSQSRARA…RQSQQLPEED (69 aa). Residues 1–112 are Cytoplasmic-facing; sequence MPVSQSRARA…AASWASARSM (112 aa). Polar residues predominate over residues 24 to 36; sequence SLNQPPKGTQEPR. A phosphoserine mark is found at Ser-43 and Ser-62. The tract at residues 70–91 is interaction with MTOR; the sequence is CMQLNPSFKGIAFNSLLAIDIC. Residues 113–133 traverse the membrane as a helical segment; that stretch reads VKLIGITSHGIPWIGGTILCL. Topologically, residues 134–141 are extracellular; that stretch reads VRSSTLAG. Residues 142-162 form a helical membrane-spanning segment; it reads QEVLMNLLLALLLDIMTVAGV. Over 163-202 the chain is Cytoplasmic; sequence QKLIKRRGPYETSPGLLDYLTMDIYAFPAGHASRAAMVSK. The helical transmembrane segment at 203 to 223 threads the bilayer; it reads FFLSHLVLAVPLRVLLVLWAF. Residues 224 to 239 are Extracellular-facing; it reads CVGLSRVMIGRHHITD. The helical transmembrane segment at 240–260 threads the bilayer; sequence VISGFIIGYFQFRLVELVWMS. Topologically, residues 261-271 are cytoplasmic; that stretch reads SNTCQMLISAW.

Belongs to the PA-phosphatase related phosphoesterase family. In terms of assembly, homo- and heterooligomer. Interacts with MTOR; controls MTOR-dependent IGF2 expression during myoblast differentiation.

The protein localises to the nucleus envelope. Its subcellular location is the endoplasmic reticulum membrane. It is found in the membrane. In terms of biological role, plays a role as negative regulator of myoblast differentiation, in part through effects on MTOR signaling. Has no detectable enzymatic activity. The sequence is that of Inactive phospholipid phosphatase 7 from Rattus norvegicus (Rat).